The primary structure comprises 505 residues: Maturase K (505 aa).

Belongs to the intron maturase 2 family. MatK subfamily.

It is found in the plastid. Its subcellular location is the chloroplast. Usually encoded in the trnK tRNA gene intron. Probably assists in splicing its own and other chloroplast group II introns. In Beta vulgaris (Sugar beet), this protein is Maturase K.